We begin with the raw amino-acid sequence, 417 residues long: Serine hydroxymethyltransferase (417 aa).

(6S)-5,6,7,8-tetrahydrofolate-binding positions include Leu-121 and 125–127; that span reads GHL. Lys-230 is modified (N6-(pyridoxal phosphate)lysine). (6S)-5,6,7,8-tetrahydrofolate is bound at residue 355–357; the sequence is SPF.

This sequence belongs to the SHMT family. As to quaternary structure, homodimer. Pyridoxal 5'-phosphate serves as cofactor.

Its subcellular location is the cytoplasm. The catalysed reaction is (6R)-5,10-methylene-5,6,7,8-tetrahydrofolate + glycine + H2O = (6S)-5,6,7,8-tetrahydrofolate + L-serine. Its pathway is one-carbon metabolism; tetrahydrofolate interconversion. It functions in the pathway amino-acid biosynthesis; glycine biosynthesis; glycine from L-serine: step 1/1. Catalyzes the reversible interconversion of serine and glycine with tetrahydrofolate (THF) serving as the one-carbon carrier. This reaction serves as the major source of one-carbon groups required for the biosynthesis of purines, thymidylate, methionine, and other important biomolecules. Also exhibits THF-independent aldolase activity toward beta-hydroxyamino acids, producing glycine and aldehydes, via a retro-aldol mechanism. This chain is Serine hydroxymethyltransferase, found in Legionella pneumophila subsp. pneumophila (strain Philadelphia 1 / ATCC 33152 / DSM 7513).